The primary structure comprises 331 residues: uncharacterized protein (331 aa).

5 Pentapeptide repeat domains span residues 50–89 (ENLQ…RLGH), 90–129 (CQMN…NFKG), 140–179 (ANLR…NLQE), 185–224 (ANLR…KLTG), and 230–269 (TNLS…NLTQ).

This is an uncharacterized protein from Synechocystis sp. (strain ATCC 27184 / PCC 6803 / Kazusa).